Reading from the N-terminus, the 414-residue chain is Histidine--tRNA ligase (414 aa).

This sequence belongs to the class-II aminoacyl-tRNA synthetase family. In terms of assembly, homodimer.

The protein resides in the cytoplasm. The enzyme catalyses tRNA(His) + L-histidine + ATP = L-histidyl-tRNA(His) + AMP + diphosphate + H(+). The chain is Histidine--tRNA ligase from Anaeromyxobacter sp. (strain K).